Here is a 196-residue protein sequence, read N- to C-terminus: Adenylate kinase (196 aa).

ATP is bound at residue 9–17 (GIPGVGKST).

The protein belongs to the archaeal adenylate kinase family.

Its subcellular location is the cytoplasm. It carries out the reaction AMP + ATP = 2 ADP. The sequence is that of Adenylate kinase from Thermococcus kodakarensis (strain ATCC BAA-918 / JCM 12380 / KOD1) (Pyrococcus kodakaraensis (strain KOD1)).